A 261-amino-acid chain; its full sequence is Zinc import ATP-binding protein ZnuC (261 aa).

One can recognise an ABC transporter domain in the interval 6 to 221 (IRLEQVGVTF…PAFVELFGKN (216 aa)). Residue 38–45 (GPNGAGKT) participates in ATP binding.

Belongs to the ABC transporter superfamily. Zinc importer (TC 3.A.1.15.5) family. The complex is composed of two ATP-binding proteins (ZnuC), two transmembrane proteins (ZnuB) and a solute-binding protein (ZnuA).

It is found in the cell inner membrane. The enzyme catalyses Zn(2+)(out) + ATP(in) + H2O(in) = Zn(2+)(in) + ADP(in) + phosphate(in) + H(+)(in). Functionally, part of the ABC transporter complex ZnuABC involved in zinc import. Responsible for energy coupling to the transport system. This Pseudomonas fluorescens (strain ATCC BAA-477 / NRRL B-23932 / Pf-5) protein is Zinc import ATP-binding protein ZnuC.